Consider the following 209-residue polypeptide: Redox-sensing transcriptional repressor Rex (209 aa).

The H-T-H motif DNA-binding region spans 16 to 55 (LYYRFIQNLSLSGKQRVSSAELSEAVKVDSATIRRDFSYF). NAD(+) is bound at residue 90 to 95 (GVGNLG).

Belongs to the transcriptional regulatory Rex family. In terms of assembly, homodimer.

The protein localises to the cytoplasm. In terms of biological role, modulates transcription in response to changes in cellular NADH/NAD(+) redox state. In Bacillus cereus (strain AH187), this protein is Redox-sensing transcriptional repressor Rex.